The primary structure comprises 558 residues: Membrane protein insertase YidC (558 aa).

Transmembrane regions (helical) follow at residues 3 to 23 (IKRTVLWVIFFMSAVMLFDNW), 364 to 384 (FVGNWGWAIVLLTLLIKAVFF), 438 to 458 (LPVVIQIPVFISLYWVLLASV), 477 to 497 (PYFILPVLMAVSMFVQTKLNP), and 508 to 528 (MMFMPIAFSVMFFFFPAGLVL).

This sequence belongs to the OXA1/ALB3/YidC family. Type 1 subfamily. In terms of assembly, interacts with the Sec translocase complex via SecD. Specifically interacts with transmembrane segments of nascent integral membrane proteins during membrane integration.

The protein localises to the cell inner membrane. Required for the insertion and/or proper folding and/or complex formation of integral membrane proteins into the membrane. Involved in integration of membrane proteins that insert both dependently and independently of the Sec translocase complex, as well as at least some lipoproteins. Aids folding of multispanning membrane proteins. The sequence is that of Membrane protein insertase YidC from Burkholderia mallei (strain NCTC 10247).